The chain runs to 208 residues: Transmembrane protein 160 (208 aa).

A mitochondrion-targeting transit peptide spans methionine 1–arginine 45. A run of 3 helical transmembrane segments spans residues glycine 82 to valine 102, alanine 110 to valine 130, and valine 147 to leucine 167. Over residues aspartate 181 to glutamate 192 the composition is skewed to acidic residues. The segment at aspartate 181–lysine 208 is disordered. Residues alanine 194 to lysine 208 show a composition bias toward basic and acidic residues.

It belongs to the TMEM160 family.

It localises to the mitochondrion inner membrane. This is Transmembrane protein 160 from Danio rerio (Zebrafish).